Consider the following 273-residue polypeptide: Urease accessory protein UreD (273 aa).

The protein belongs to the UreD family. In terms of assembly, ureD, UreF and UreG form a complex that acts as a GTP-hydrolysis-dependent molecular chaperone, activating the urease apoprotein by helping to assemble the nickel containing metallocenter of UreC. The UreE protein probably delivers the nickel.

It is found in the cytoplasm. Its function is as follows. Required for maturation of urease via the functional incorporation of the urease nickel metallocenter. In Rhizobium leguminosarum bv. viciae, this protein is Urease accessory protein UreD.